We begin with the raw amino-acid sequence, 384 residues long: Cytochrome b (384 aa).

The next 4 membrane-spanning stretches (helical) occupy residues 32 to 52, 76 to 98, 113 to 133, and 179 to 199; these read LGSL…FLAM, WLIR…IHIG, VWTV…LGYC, and FFTF…MHLM. Heme b is bound by residues H82 and H96. Heme b is bound by residues H183 and H197. An a ubiquinone-binding site is contributed by H202. A run of 4 helical transmembrane segments spans residues 225–245, 289–309, 321–341, and 348–368; these read FIFK…LFVF, LGGV…PITD, LSKF…KLGE, and FILM…ILVP.

Belongs to the cytochrome b family. As to quaternary structure, fungal cytochrome b-c1 complex contains 10 subunits; 3 respiratory subunits, 2 core proteins and 5 low-molecular weight proteins. Cytochrome b-c1 complex is a homodimer. Heme b serves as cofactor.

The protein resides in the mitochondrion inner membrane. Its function is as follows. Component of the ubiquinol-cytochrome c reductase complex (complex III or cytochrome b-c1 complex) that is part of the mitochondrial respiratory chain. The b-c1 complex mediates electron transfer from ubiquinol to cytochrome c. Contributes to the generation of a proton gradient across the mitochondrial membrane that is then used for ATP synthesis. The chain is Cytochrome b (COB) from Eremothecium gossypii (strain ATCC 10895 / CBS 109.51 / FGSC 9923 / NRRL Y-1056) (Yeast).